A 901-amino-acid polypeptide reads, in one-letter code: HTH-type transcriptional regulator MalT (901 aa).

An ATP-binding site is contributed by 39-46 (SPAGYGKT). Residues 829-894 (ELIRTSPLTQ…AAVQHAQKLL (66 aa)) enclose the HTH luxR-type domain. The H-T-H motif DNA-binding region spans 853 to 872 (NEQIAGELEVAATTIKTHIR).

Belongs to the MalT family. As to quaternary structure, monomer in solution. Oligomerizes to an active state in the presence of the positive effectors ATP and maltotriose.

Its activity is regulated as follows. Activated by ATP and maltotriose, which are both required for DNA binding. Its function is as follows. Positively regulates the transcription of the maltose regulon whose gene products are responsible for uptake and catabolism of malto-oligosaccharides. Specifically binds to the promoter region of its target genes, recognizing a short DNA motif called the MalT box. The chain is HTH-type transcriptional regulator MalT from Escherichia coli (strain 55989 / EAEC).